The following is a 227-amino-acid chain: ATP-dependent dethiobiotin synthetase BioD (227 aa).

12–17 (DAGKTH) provides a ligand contact to ATP. Residue threonine 16 participates in Mg(2+) binding. Lysine 37 is an active-site residue. Serine 41 lines the substrate pocket. ATP contacts are provided by residues aspartate 54, 116–119 (EGAG), 176–177 (NQ), and 205–207 (PYS). The Mg(2+) site is built by aspartate 54 and glutamate 116.

The protein belongs to the dethiobiotin synthetase family. As to quaternary structure, homodimer. Mg(2+) is required as a cofactor.

It localises to the cytoplasm. The enzyme catalyses (7R,8S)-7,8-diammoniononanoate + CO2 + ATP = (4R,5S)-dethiobiotin + ADP + phosphate + 3 H(+). Its pathway is cofactor biosynthesis; biotin biosynthesis; biotin from 7,8-diaminononanoate: step 1/2. Functionally, catalyzes a mechanistically unusual reaction, the ATP-dependent insertion of CO2 between the N7 and N8 nitrogen atoms of 7,8-diaminopelargonic acid (DAPA, also called 7,8-diammoniononanoate) to form a ureido ring. The polypeptide is ATP-dependent dethiobiotin synthetase BioD (Pseudoalteromonas translucida (strain TAC 125)).